The following is a 189-amino-acid chain: Ion-translocating oxidoreductase complex subunit B (189 aa).

A hydrophobic region spans residues 1 to 26; it reads MSAIVIAIVVLTILALVFGVLLGFAA. One can recognise a 4Fe-4S domain in the interval 32–90; it reads EGNPLTDQIEALLPQTQCGQCGYPGCRPYAEAIANGDKVNKCPPGGAATMEKLADLMGV. 12 residues coordinate [4Fe-4S] cluster: Cys49, Cys52, Cys57, Cys73, Cys114, Cys117, Cys120, Cys124, Cys144, Cys147, Cys150, and Cys154. 4Fe-4S ferredoxin-type domains follow at residues 105–134 and 135–164; these read KVAY…GSGK and LMHT…MLPV.

Belongs to the 4Fe4S bacterial-type ferredoxin family. RnfB subfamily. As to quaternary structure, the complex is composed of six subunits: RnfA, RnfB, RnfC, RnfD, RnfE and RnfG. Requires [4Fe-4S] cluster as cofactor.

It is found in the cell inner membrane. Functionally, part of a membrane-bound complex that couples electron transfer with translocation of ions across the membrane. This is Ion-translocating oxidoreductase complex subunit B from Shewanella pealeana (strain ATCC 700345 / ANG-SQ1).